The sequence spans 554 residues: MSATAVHSLWTTASGVTSAAPGNSFTAPKIEYTQLMPVLIIVVAAVLGILVEAFVPRRARYHTQLFLTVVAVAGSFAAIVGLAAGGYGTTDAGIVAMGAIAIDGPTLFLQGTILLVAMVALFTFAERRLDPGSNGNRVDSFAAQAGSVPGGEGEKAAVRAGFTTTEVFPLLLFSVAGLLVFPAANDLLTLFIALEVFSLPLYLLCAVARRKRLMSQEAAVKYFLLGAFSSAFLLFGIALLYGYAGSLSYADIANVVDGSVLEIDPALADTMGNDALLLIGGAMILTGLLFKVGAVPFHMWTPDVYQGAPTPVTGFMAAATKVAAFGALLRLLYVALPGLAWDLRPVMWAVAIVTMLGGAIVAITQTDIKRLLAYSSIAHAGFILAGVIAASPEGISSVLFYLLAYSFVTVGAFAVVTLVRDAGGEATHLSKWAGLGRRSPLVAAVFAVFLLAFAGIPLTSGFSGKFAVFKAAAEGGAGALVVVGVLSSAVAAFFYIRVIVLMFFSEPKADGPTVAVPSPLTMTTIAVGVAVTLVLGLAPQYFLDLASQAGVFVR.

A run of 14 helical transmembrane segments spans residues Leu-35 to Val-55, Leu-65 to Gly-85, Pro-105 to Ala-125, Gly-161 to Phe-181, Leu-187 to Val-207, Tyr-222 to Gly-242, Ala-275 to Val-295, Val-322 to Asp-342, Pro-345 to Gln-365, Leu-371 to Ser-391, Val-398 to Leu-418, Val-442 to Phe-462, Gly-476 to Ile-496, and Ile-525 to Leu-545.

Belongs to the complex I subunit 2 family. NDH-1 is composed of 14 different subunits. Subunits NuoA, H, J, K, L, M, N constitute the membrane sector of the complex.

The protein localises to the cell membrane. The enzyme catalyses a quinone + NADH + 5 H(+)(in) = a quinol + NAD(+) + 4 H(+)(out). In terms of biological role, NDH-1 shuttles electrons from NADH, via FMN and iron-sulfur (Fe-S) centers, to quinones in the respiratory chain. The immediate electron acceptor for the enzyme in this species is believed to be a menaquinone. Couples the redox reaction to proton translocation (for every two electrons transferred, four hydrogen ions are translocated across the cytoplasmic membrane), and thus conserves the redox energy in a proton gradient. The polypeptide is NADH-quinone oxidoreductase subunit N 3 (Streptomyces griseus subsp. griseus (strain JCM 4626 / CBS 651.72 / NBRC 13350 / KCC S-0626 / ISP 5235)).